We begin with the raw amino-acid sequence, 323 residues long: Prenyl transferase (323 aa).

Residues lysine 46, arginine 49, and histidine 81 each coordinate isopentenyl diphosphate. The Mg(2+) site is built by aspartate 88 and aspartate 92. Residue arginine 97 participates in an all-trans-polyprenyl diphosphate binding. Arginine 98 contributes to the isopentenyl diphosphate binding site. An all-trans-polyprenyl diphosphate-binding residues include lysine 174, threonine 175, and glutamine 212.

Belongs to the FPP/GGPP synthase family. Mg(2+) serves as cofactor.

Its subcellular location is the plastid. It is found in the chloroplast. Possible role in synthesis of the nonaprenyl side chain of plastoquinone or in synthesis of other prenyl chains such as undekaprenyl pyrophosphate. This is Prenyl transferase (preA) from Cyanidium caldarium (Red alga).